Here is a 429-residue protein sequence, read N- to C-terminus: Mannose-6-phosphate isomerase (429 aa).

Zn(2+)-binding residues include Gln-110, His-112, Glu-137, and His-282. Arg-301 is an active-site residue.

It belongs to the mannose-6-phosphate isomerase type 1 family. The cofactor is Zn(2+).

The protein localises to the cytoplasm. The catalysed reaction is D-mannose 6-phosphate = D-fructose 6-phosphate. Its pathway is nucleotide-sugar biosynthesis; GDP-alpha-D-mannose biosynthesis; alpha-D-mannose 1-phosphate from D-fructose 6-phosphate: step 1/2. Involved in the synthesis of the GDP-mannose and dolichol-phosphate-mannose required for a number of critical mannosyl transfer reactions. The sequence is that of Mannose-6-phosphate isomerase (PMI1) from Candida glabrata (strain ATCC 2001 / BCRC 20586 / JCM 3761 / NBRC 0622 / NRRL Y-65 / CBS 138) (Yeast).